The following is a 119-amino-acid chain: Large ribosomal subunit protein bL20 (119 aa).

This sequence belongs to the bacterial ribosomal protein bL20 family.

In terms of biological role, binds directly to 23S ribosomal RNA and is necessary for the in vitro assembly process of the 50S ribosomal subunit. It is not involved in the protein synthesizing functions of that subunit. In Halorhodospira halophila (strain DSM 244 / SL1) (Ectothiorhodospira halophila (strain DSM 244 / SL1)), this protein is Large ribosomal subunit protein bL20.